A 185-amino-acid chain; its full sequence is Ribosomal RNA small subunit methyltransferase G (185 aa).

Residues G59, F64, 110–111 (IQ), and R127 contribute to the S-adenosyl-L-methionine site.

It belongs to the methyltransferase superfamily. RNA methyltransferase RsmG family.

The protein resides in the cytoplasm. It catalyses the reaction guanosine(527) in 16S rRNA + S-adenosyl-L-methionine = N(7)-methylguanosine(527) in 16S rRNA + S-adenosyl-L-homocysteine. Functionally, specifically methylates the N7 position of guanine in position 527 of 16S rRNA. This Helicobacter hepaticus (strain ATCC 51449 / 3B1) protein is Ribosomal RNA small subunit methyltransferase G.